We begin with the raw amino-acid sequence, 94 residues long: Pyrimidine/purine nucleoside phosphorylase (94 aa).

It belongs to the nucleoside phosphorylase PpnP family.

The catalysed reaction is a purine D-ribonucleoside + phosphate = a purine nucleobase + alpha-D-ribose 1-phosphate. It carries out the reaction adenosine + phosphate = alpha-D-ribose 1-phosphate + adenine. It catalyses the reaction cytidine + phosphate = cytosine + alpha-D-ribose 1-phosphate. The enzyme catalyses guanosine + phosphate = alpha-D-ribose 1-phosphate + guanine. The catalysed reaction is inosine + phosphate = alpha-D-ribose 1-phosphate + hypoxanthine. It carries out the reaction thymidine + phosphate = 2-deoxy-alpha-D-ribose 1-phosphate + thymine. It catalyses the reaction uridine + phosphate = alpha-D-ribose 1-phosphate + uracil. The enzyme catalyses xanthosine + phosphate = alpha-D-ribose 1-phosphate + xanthine. Functionally, catalyzes the phosphorolysis of diverse nucleosides, yielding D-ribose 1-phosphate and the respective free bases. Can use uridine, adenosine, guanosine, cytidine, thymidine, inosine and xanthosine as substrates. Also catalyzes the reverse reactions. The polypeptide is Pyrimidine/purine nucleoside phosphorylase (Pseudomonas putida (strain ATCC 700007 / DSM 6899 / JCM 31910 / BCRC 17059 / LMG 24140 / F1)).